The chain runs to 209 residues: Peptide methionine sulfoxide reductase MsrA (209 aa).

Cys14 is a catalytic residue. The tract at residues 183–209 is disordered; it reads FSALTTGGNQPGARGGLTNNTCQHPRH. The segment covering 199–209 has biased composition (polar residues); that stretch reads LTNNTCQHPRH.

Belongs to the MsrA Met sulfoxide reductase family.

The enzyme catalyses L-methionyl-[protein] + [thioredoxin]-disulfide + H2O = L-methionyl-(S)-S-oxide-[protein] + [thioredoxin]-dithiol. It carries out the reaction [thioredoxin]-disulfide + L-methionine + H2O = L-methionine (S)-S-oxide + [thioredoxin]-dithiol. In terms of biological role, has an important function as a repair enzyme for proteins that have been inactivated by oxidation. Catalyzes the reversible oxidation-reduction of methionine sulfoxide in proteins to methionine. The chain is Peptide methionine sulfoxide reductase MsrA from Pseudomonas fluorescens.